The following is a 468-amino-acid chain: Glutathione reductase (468 aa).

2 residues coordinate FAD: S17 and G18. S17 contacts glutathione. A glutathione-binding site is contributed by R24. FAD-binding residues include E38, T45, C46, and K54. Residues C46 and C51 are joined by a disulfide bond. A glutathione-binding site is contributed by Y103. Residue A119 participates in FAD binding. NADP(+) is bound by residues A185, I188, E191, R208, R214, and G276. D317 lines the FAD pocket. NADP(+) is bound at residue E323. Residue T325 participates in FAD binding. R333 contributes to the glutathione binding site. V358 is an NADP(+) binding site. K410 lines the glutathione pocket. Position 457 (H457) interacts with FAD. H457 functions as the Proton acceptor in the catalytic mechanism.

This sequence belongs to the class-I pyridine nucleotide-disulfide oxidoreductase family. In terms of assembly, homodimer. The cofactor is FAD.

The protein resides in the cytoplasm. It localises to the mitochondrion. The enzyme catalyses 2 glutathione + NADP(+) = glutathione disulfide + NADPH + H(+). Catalyzes the reduction of glutathione disulfide (GSSG) to reduced glutathione (GSH). Constitutes the major mechanism to maintain a high GSH:GSSG ratio in the cytosol. The chain is Glutathione reductase (gtr-1) from Neurospora crassa (strain ATCC 24698 / 74-OR23-1A / CBS 708.71 / DSM 1257 / FGSC 987).